The sequence spans 623 residues: Pyranose 2-oxidase (623 aa).

The N-terminal stretch at 1-28 (MSTSSSDPFFNFAKSSFRSAAAQKASAS) is a signal peptide. A propeptide spanning residues 29 to 38 (SLPPLPGPDK) is cleaved from the precursor. Residue His167 is modified to Tele-8alpha-FAD histidine. Substrate-binding residues include Gln448 and His450. The Proton acceptor role is filled by His548. Asn593 is an active-site residue.

This sequence belongs to the GMC oxidoreductase family. In terms of assembly, homotetramer. It depends on FAD as a cofactor.

Its subcellular location is the periplasm. The catalysed reaction is D-glucose + O2 = 2-dehydro-D-glucose + H2O2. Functionally, catalyzes the oxidation of various aldopyranoses and disaccharides on carbon-2 to the corresponding 2-keto sugars concomitant with the reduction of O(2) to H(2)O(2). Plays an important role in lignin degradation of wood rot fungi by supplying the essential cosubstrate H(2)O(2) for the ligninolytic peroxidases, lignin peroxidase and manganese-dependent peroxidase. This chain is Pyranose 2-oxidase (p2ox), found in Peniophora sp. (strain SG) (White-rot fungus).